The following is a 72-amino-acid chain: MSRRKVCRFTVDGVKEIDYKDVNKLKAYITETGKIVPSRVTGTSAKYQRQLATAIKRARFLALLPYCDRHFN.

The protein belongs to the bacterial ribosomal protein bS18 family. As to quaternary structure, part of the 30S ribosomal subunit. Forms a tight heterodimer with protein bS6.

Binds as a heterodimer with protein bS6 to the central domain of the 16S rRNA, where it helps stabilize the platform of the 30S subunit. In Francisella philomiragia subsp. philomiragia (strain ATCC 25017 / CCUG 19701 / FSC 153 / O#319-036), this protein is Small ribosomal subunit protein bS18.